The following is a 433-amino-acid chain: Trigger factor (433 aa).

Positions 163–248 constitute a PPIase FKBP-type domain; the sequence is GDVVVLDFAA…VHAVKERRLP (86 aa).

This sequence belongs to the FKBP-type PPIase family. Tig subfamily.

Its subcellular location is the cytoplasm. It carries out the reaction [protein]-peptidylproline (omega=180) = [protein]-peptidylproline (omega=0). Involved in protein export. Acts as a chaperone by maintaining the newly synthesized protein in an open conformation. Functions as a peptidyl-prolyl cis-trans isomerase. In Nitratidesulfovibrio vulgaris (strain DP4) (Desulfovibrio vulgaris), this protein is Trigger factor.